We begin with the raw amino-acid sequence, 206 residues long: Thymidylate kinase (206 aa).

Residue 11–18 (GIDGAGKT) participates in ATP binding.

It belongs to the thymidylate kinase family.

It carries out the reaction dTMP + ATP = dTDP + ADP. Functionally, phosphorylation of dTMP to form dTDP in both de novo and salvage pathways of dTTP synthesis. This chain is Thymidylate kinase, found in Burkholderia ambifaria (strain MC40-6).